The sequence spans 374 residues: tRNA-specific 2-thiouridylase MnmA (374 aa).

ATP contacts are provided by residues 17-24 (GMSGGVDS) and M43. An interaction with target base in tRNA region spans residues 103 to 105 (NPD). C108 acts as the Nucleophile in catalysis. A disulfide bond links C108 and C204. G132 is a binding site for ATP. The interval 154–156 (KDQ) is interaction with tRNA. C204 (cysteine persulfide intermediate) is an active-site residue. Residues 316-317 (RY) are interaction with tRNA.

It belongs to the MnmA/TRMU family.

The protein localises to the cytoplasm. The catalysed reaction is S-sulfanyl-L-cysteinyl-[protein] + uridine(34) in tRNA + AH2 + ATP = 2-thiouridine(34) in tRNA + L-cysteinyl-[protein] + A + AMP + diphosphate + H(+). Functionally, catalyzes the 2-thiolation of uridine at the wobble position (U34) of tRNA, leading to the formation of s(2)U34. This Pseudomonas putida (strain W619) protein is tRNA-specific 2-thiouridylase MnmA.